We begin with the raw amino-acid sequence, 505 residues long: Probable ribonuclease FAU-1 (505 aa).

The disordered stretch occupies residues 389–408 (ISGHGSGTYDELGTPRESGD).

The protein belongs to the FAU-1 family.

Probable RNase involved in rRNA stability through maturation and/or degradation of precursor rRNAs. Binds to RNA in loop regions with AU-rich sequences. This is Probable ribonuclease FAU-1 from Haloquadratum walsbyi (strain DSM 16790 / HBSQ001).